The sequence spans 262 residues: 3-methyl-2-oxobutanoate hydroxymethyltransferase (262 aa).

Residues Asp-44 and Asp-83 each contribute to the Mg(2+) site. Residues 44 to 45, Asp-83, and Lys-113 each bind 3-methyl-2-oxobutanoate; that span reads DS. Residue Glu-115 participates in Mg(2+) binding. Glu-182 acts as the Proton acceptor in catalysis.

Belongs to the PanB family. Homodecamer; pentamer of dimers. It depends on Mg(2+) as a cofactor.

The protein resides in the cytoplasm. It catalyses the reaction 3-methyl-2-oxobutanoate + (6R)-5,10-methylene-5,6,7,8-tetrahydrofolate + H2O = 2-dehydropantoate + (6S)-5,6,7,8-tetrahydrofolate. Its pathway is cofactor biosynthesis; (R)-pantothenate biosynthesis; (R)-pantoate from 3-methyl-2-oxobutanoate: step 1/2. Its function is as follows. Catalyzes the reversible reaction in which hydroxymethyl group from 5,10-methylenetetrahydrofolate is transferred onto alpha-ketoisovalerate to form ketopantoate. This chain is 3-methyl-2-oxobutanoate hydroxymethyltransferase, found in Picosynechococcus sp. (strain ATCC 27264 / PCC 7002 / PR-6) (Agmenellum quadruplicatum).